Reading from the N-terminus, the 292-residue chain is uncharacterized protein (292 aa).

Catalysis depends on charge relay system residues S44 and Y106. Catalysis depends on Y132, which acts as the Proton donor. Residue K161 is the Schiff-base intermediate with substrate of the active site.

This sequence belongs to the DapA family. In terms of assembly, homotetramer.

It localises to the cytoplasm. This is an uncharacterized protein from Thermoplasma acidophilum (strain ATCC 25905 / DSM 1728 / JCM 9062 / NBRC 15155 / AMRC-C165).